The chain runs to 1228 residues: DNA-directed RNA polymerase subunit beta (1228 aa).

It belongs to the RNA polymerase beta chain family. The RNAP catalytic core consists of 2 alpha, 1 beta, 1 beta' and 1 omega subunit. When a sigma factor is associated with the core the holoenzyme is formed, which can initiate transcription.

It carries out the reaction RNA(n) + a ribonucleoside 5'-triphosphate = RNA(n+1) + diphosphate. Its function is as follows. DNA-dependent RNA polymerase catalyzes the transcription of DNA into RNA using the four ribonucleoside triphosphates as substrates. This is DNA-directed RNA polymerase subunit beta from Leptospira biflexa serovar Patoc (strain Patoc 1 / Ames).